The sequence spans 104 residues: UPF0145 protein RD1_2695 (104 aa).

This sequence belongs to the UPF0145 family.

In Roseobacter denitrificans (strain ATCC 33942 / OCh 114) (Erythrobacter sp. (strain OCh 114)), this protein is UPF0145 protein RD1_2695.